The chain runs to 487 residues: 3-octaprenyl-4-hydroxybenzoate carboxy-lyase (487 aa).

Asn172 lines the Mn(2+) pocket. Prenylated FMN is bound by residues 175–177, 189–191, and 194–195; these read IYR, RWL, and RG. Glu238 lines the Mn(2+) pocket. Catalysis depends on Asp287, which acts as the Proton donor.

It belongs to the UbiD family. In terms of assembly, homohexamer. Requires prenylated FMN as cofactor. Mn(2+) is required as a cofactor.

The protein resides in the cell membrane. The catalysed reaction is a 4-hydroxy-3-(all-trans-polyprenyl)benzoate + H(+) = a 2-(all-trans-polyprenyl)phenol + CO2. Its pathway is cofactor biosynthesis; ubiquinone biosynthesis. Catalyzes the decarboxylation of 3-octaprenyl-4-hydroxy benzoate to 2-octaprenylphenol, an intermediate step in ubiquinone biosynthesis. This is 3-octaprenyl-4-hydroxybenzoate carboxy-lyase from Nitrosococcus oceani (strain ATCC 19707 / BCRC 17464 / JCM 30415 / NCIMB 11848 / C-107).